The primary structure comprises 339 residues: Ketol-acid reductoisomerase (NADP(+)) (339 aa).

Residues 1-182 form the KARI N-terminal Rossmann domain; it reads MRVYYDRDAD…GGGRAGIIET (182 aa). NADP(+) is bound by residues 24–27, arginine 48, serine 51, serine 53, and 83–86; these read YGSQ and DELQ. Histidine 108 is an active-site residue. Glycine 134 serves as a coordination point for NADP(+). A KARI C-terminal knotted domain is found at 183–328; sequence TFKEECETDL…AKLRDMMPWI (146 aa). Mg(2+) is bound by residues aspartate 191, glutamate 195, glutamate 227, and glutamate 231. Serine 252 contributes to the substrate binding site.

This sequence belongs to the ketol-acid reductoisomerase family. Mg(2+) serves as cofactor.

It catalyses the reaction (2R)-2,3-dihydroxy-3-methylbutanoate + NADP(+) = (2S)-2-acetolactate + NADPH + H(+). The enzyme catalyses (2R,3R)-2,3-dihydroxy-3-methylpentanoate + NADP(+) = (S)-2-ethyl-2-hydroxy-3-oxobutanoate + NADPH + H(+). It functions in the pathway amino-acid biosynthesis; L-isoleucine biosynthesis; L-isoleucine from 2-oxobutanoate: step 2/4. It participates in amino-acid biosynthesis; L-valine biosynthesis; L-valine from pyruvate: step 2/4. Its function is as follows. Involved in the biosynthesis of branched-chain amino acids (BCAA). Catalyzes an alkyl-migration followed by a ketol-acid reduction of (S)-2-acetolactate (S2AL) to yield (R)-2,3-dihydroxy-isovalerate. In the isomerase reaction, S2AL is rearranged via a Mg-dependent methyl migration to produce 3-hydroxy-3-methyl-2-ketobutyrate (HMKB). In the reductase reaction, this 2-ketoacid undergoes a metal-dependent reduction by NADPH to yield (R)-2,3-dihydroxy-isovalerate. This chain is Ketol-acid reductoisomerase (NADP(+)), found in Bradyrhizobium diazoefficiens (strain JCM 10833 / BCRC 13528 / IAM 13628 / NBRC 14792 / USDA 110).